Consider the following 209-residue polypeptide: Ribosomal RNA large subunit methyltransferase E (209 aa).

S-adenosyl-L-methionine contacts are provided by Gly63, Trp65, Asp83, Asp99, and Asp124. Lys164 functions as the Proton acceptor in the catalytic mechanism.

Belongs to the class I-like SAM-binding methyltransferase superfamily. RNA methyltransferase RlmE family.

Its subcellular location is the cytoplasm. It carries out the reaction uridine(2552) in 23S rRNA + S-adenosyl-L-methionine = 2'-O-methyluridine(2552) in 23S rRNA + S-adenosyl-L-homocysteine + H(+). Its function is as follows. Specifically methylates the uridine in position 2552 of 23S rRNA at the 2'-O position of the ribose in the fully assembled 50S ribosomal subunit. The sequence is that of Ribosomal RNA large subunit methyltransferase E from Aliivibrio fischeri (strain ATCC 700601 / ES114) (Vibrio fischeri).